A 311-amino-acid polypeptide reads, in one-letter code: RNA polymerase sigma factor SigA4 (311 aa).

The sigma-70 factor domain-2 stretch occupies residues 78-148 (MLKANLRLVV…TRAIDNHART (71 aa)). The short motif at 102–105 (DLIQ) is the Interaction with polymerase core subunit RpoC element. Positions 157-234 (EKISRIKKMT…DPKSLEPMDA (78 aa)) are sigma-70 factor domain-3. Residues 247-304 (WLAHLTEREQQVLQLRFGLHDGEQHTLAEIGRRLNVSRERIRQVEARALQKLRVLSQQ) form a sigma-70 factor domain-4 region. The segment at residues 273 to 292 (LAEIGRRLNVSRERIRQVEA) is a DNA-binding region (H-T-H motif).

Belongs to the sigma-70 factor family.

The protein localises to the cytoplasm. In terms of biological role, sigma factors are initiation factors that promote the attachment of RNA polymerase to specific initiation sites and are then released. This Synechococcus elongatus (strain ATCC 33912 / PCC 7942 / FACHB-805) (Anacystis nidulans R2) protein is RNA polymerase sigma factor SigA4 (sigA4).